The primary structure comprises 449 residues: Chromosomal replication initiator protein DnaA (449 aa).

Residues 1–69 (MEKVWLEAQS…VEAISSLTSV (69 aa)) are domain I, interacts with DnaA modulators. The tract at residues 69 to 112 (VKYQIEFKITEKIPLESKPVDNFTPVIKDNEPSKETNKNIDITA) is domain II. Positions 113-329 (NLNPKYTFDS…GMLIRLGAYA (217 aa)) are domain III, AAA+ region. ATP-binding residues include Gly-157, Gly-159, Lys-160, and Thr-161. A domain IV, binds dsDNA region spans residues 330 to 449 (SLTGSEITLN…VENLKKELIT (120 aa)).

The protein belongs to the DnaA family. Oligomerizes as a right-handed, spiral filament on DNA at oriC.

It is found in the cytoplasm. In terms of biological role, plays an essential role in the initiation and regulation of chromosomal replication. ATP-DnaA binds to the origin of replication (oriC) to initiate formation of the DNA replication initiation complex once per cell cycle. Binds the DnaA box (a 9 base pair repeat at the origin) and separates the double-stranded (ds)DNA. Forms a right-handed helical filament on oriC DNA; dsDNA binds to the exterior of the filament while single-stranded (ss)DNA is stabiized in the filament's interior. The ATP-DnaA-oriC complex binds and stabilizes one strand of the AT-rich DNA unwinding element (DUE), permitting loading of DNA polymerase. After initiation quickly degrades to an ADP-DnaA complex that is not apt for DNA replication. Binds acidic phospholipids. This chain is Chromosomal replication initiator protein DnaA, found in Geotalea uraniireducens (strain Rf4) (Geobacter uraniireducens).